A 347-amino-acid chain; its full sequence is GMP reductase (347 aa).

108–131 serves as a coordination point for NADP(+); it reads AEFEKVKKIMALSEEFVFICIDIA. Gly-181 and Gly-183 together coordinate K(+). Cys-186 (thioimidate intermediate) is an active-site residue. 216-239 contributes to the NADP(+) binding site; sequence IIGDGGCSCAGDVSKAFGGGADFV.

The protein belongs to the IMPDH/GMPR family. GuaC type 1 subfamily. As to quaternary structure, homotetramer.

It carries out the reaction IMP + NH4(+) + NADP(+) = GMP + NADPH + 2 H(+). Functionally, catalyzes the irreversible NADPH-dependent deamination of GMP to IMP. It functions in the conversion of nucleobase, nucleoside and nucleotide derivatives of G to A nucleotides, and in maintaining the intracellular balance of A and G nucleotides. This chain is GMP reductase, found in Vibrio atlanticus (strain LGP32) (Vibrio splendidus (strain Mel32)).